We begin with the raw amino-acid sequence, 507 residues long: ATP synthase subunit alpha, chloroplastic (507 aa).

170-177 (GDRQTGKT) is an ATP binding site. At threonine 257 the chain carries Phosphothreonine.

This sequence belongs to the ATPase alpha/beta chains family. As to quaternary structure, F-type ATPases have 2 components, CF(1) - the catalytic core - and CF(0) - the membrane proton channel. CF(1) has five subunits: alpha(3), beta(3), gamma(1), delta(1), epsilon(1). CF(0) has four main subunits: a, b, b' and c.

Its subcellular location is the plastid. It is found in the chloroplast thylakoid membrane. It catalyses the reaction ATP + H2O + 4 H(+)(in) = ADP + phosphate + 5 H(+)(out). Produces ATP from ADP in the presence of a proton gradient across the membrane. The alpha chain is a regulatory subunit. This is ATP synthase subunit alpha, chloroplastic from Lepidium virginicum (Virginia pepperweed).